We begin with the raw amino-acid sequence, 102 residues long: Small ribosomal subunit protein uS10 (102 aa).

It belongs to the universal ribosomal protein uS10 family. In terms of assembly, part of the 30S ribosomal subunit.

Its function is as follows. Involved in the binding of tRNA to the ribosomes. The chain is Small ribosomal subunit protein uS10 from Clostridium kluyveri (strain NBRC 12016).